A 407-amino-acid polypeptide reads, in one-letter code: Substance-P receptor (407 aa).

At 1–31 (MDNVLQVDSDLFPNISTNTSEPNQFVQPAWQ) the chain is on the extracellular side. Residues Asn14 and Asn18 are each glycosylated (N-linked (GlcNAc...) asparagine). The helical transmembrane segment at 32–54 (IVLWAAAYTVIVVTSVVGNVVVM) threads the bilayer. Residues 55-64 (WIILAHKRMR) lie on the Cytoplasmic side of the membrane. Residues 65–86 (TVTNYFLVNLAFAEASMAAFNT) form a helical membrane-spanning segment. Residues 87-106 (VVNFTYAVHNEWYYGLFYCK) are Extracellular-facing. The cysteines at positions 105 and 180 are disulfide-linked. Residues 107-128 (FHNFFPIAAVFASIYSMTAVAF) traverse the membrane as a helical segment. Residues 129 to 148 (DRYMAIIHPLQPRLSATATK) lie on the Cytoplasmic side of the membrane. Residues 149–169 (VVICVIWVLALLLAFPQGYYS) form a helical membrane-spanning segment. Residues 170–194 (TTETMPNRVVCMIEWPEHPNKIYEK) lie on the Extracellular side of the membrane. Residues 195–219 (VYHICVTVLIYFLPLLVIGYAYTVV) form a helical membrane-spanning segment. The Cytoplasmic portion of the chain corresponds to 220 to 248 (GITLWASEIPGDSSDRYHEQVSAKRKVVK). Residues 249-270 (MMIVVVCTFAICWLPFHIFFLL) traverse the membrane as a helical segment. Residues 271 to 283 (PYINPDLYLEKFI) lie on the Extracellular side of the membrane. The chain crosses the membrane as a helical span at residues 284–308 (QQVYLAIMWLAMSSTMYNPIIYCCL). At 309–407 (NDRFRLGFKH…SFSFYSNMLS (99 aa)) the chain is on the cytoplasmic side. Cys322 carries S-palmitoyl cysteine lipidation. The interval 365 to 394 (HEEELEDGPKTTPSSLDLTSNGSSRSDSKT) is disordered. A compositionally biased stretch (polar residues) spans 375-394 (TTPSSLDLTSNGSSRSDSKT).

Belongs to the G-protein coupled receptor 1 family. Interacts with ARRB1.

It is found in the cell membrane. Functionally, this is a receptor for the tachykinin neuropeptide substance P. It is probably associated with G proteins that activate a phosphatidylinositol-calcium second messenger system. The polypeptide is Substance-P receptor (TACR1) (Canis lupus familiaris (Dog)).